Reading from the N-terminus, the 560-residue chain is NADH-quinone oxidoreductase subunit C/D (560 aa).

An NADH dehydrogenase I subunit C region spans residues N2–L157. The interval K175–R560 is NADH dehydrogenase I subunit D.

This sequence in the N-terminal section; belongs to the complex I 30 kDa subunit family. The protein in the C-terminal section; belongs to the complex I 49 kDa subunit family. NDH-1 is composed of 13 different subunits. Subunits NuoB, CD, E, F, and G constitute the peripheral sector of the complex.

It is found in the cytoplasm. The protein resides in the cell inner membrane. It catalyses the reaction a quinone + NADH + 5 H(+)(in) = a quinol + NAD(+) + 4 H(+)(out). In terms of biological role, NDH-1 shuttles electrons from NADH, via FMN and iron-sulfur (Fe-S) centers, to quinones in the respiratory chain. The immediate electron acceptor for the enzyme in this species is believed to be ubiquinone. Couples the redox reaction to proton translocation (for every two electrons transferred, four hydrogen ions are translocated across the cytoplasmic membrane), and thus conserves the redox energy in a proton gradient. This is NADH-quinone oxidoreductase subunit C/D from Bdellovibrio bacteriovorus (strain ATCC 15356 / DSM 50701 / NCIMB 9529 / HD100).